The primary structure comprises 272 residues: Centromere protein V-like protein 1 (272 aa).

Residues 1-17 (MGRVRNRATAQRRRRKR) show a composition bias toward basic residues. 2 disordered regions span residues 1–23 (MGRVRNRATAQRRRRKRPGDPPA) and 65–95 (RRVRKAGPRDLLPSAPTPDPPGPAPSPKDLD). Residues 79-90 (APTPDPPGPAPS) are compositionally biased toward pro residues. One can recognise a CENP-V/GFA domain in the interval 133–246 (HTGGCHCGAV…EEVGGGDPGE (114 aa)). Zn(2+) is bound by residues cysteine 137, cysteine 139, cysteine 157, cysteine 159, cysteine 162, cysteine 201, and cysteine 204. Positions 240–272 (GGGDPGEEAAEEHKAIHKTSSQSAPACPREQEQ) are disordered.

Belongs to the Gfa family. Zn(2+) is required as a cofactor.

The polypeptide is Centromere protein V-like protein 1 (Homo sapiens (Human)).